The primary structure comprises 245 residues: Carbohydrate deacetylase (245 aa).

H61 and H122 together coordinate Mg(2+).

The protein belongs to the YdjC deacetylase family. Mg(2+) serves as cofactor.

Probably catalyzes the deacetylation of acetylated carbohydrates an important step in the degradation of oligosaccharides. The protein is Carbohydrate deacetylase (celC) of Geobacillus stearothermophilus (Bacillus stearothermophilus).